We begin with the raw amino-acid sequence, 95 residues long: Large ribosomal subunit protein bL27 (95 aa).

Positions 1-9 (MLNMNLQFF) are excised as a propeptide.

It belongs to the bacterial ribosomal protein bL27 family. The N-terminus is cleaved by ribosomal processing cysteine protease Prp.

This chain is Large ribosomal subunit protein bL27, found in Agathobacter rectalis (strain ATCC 33656 / DSM 3377 / JCM 17463 / KCTC 5835 / VPI 0990) (Eubacterium rectale).